We begin with the raw amino-acid sequence, 361 residues long: Putative F-box protein At3g19560 (361 aa).

Positions 3 to 49 constitute an F-box domain; that stretch reads MTMMSDISQDLLEEILSRVPITSLRAVKSTCKRWKDLLNDPSFSKKY.

This is Putative F-box protein At3g19560 from Arabidopsis thaliana (Mouse-ear cress).